The chain runs to 568 residues: Circadian clock protein KaiC2 (568 aa).

2 consecutive KaiC domains span residues 11–250 (IKCP…SVSQ) and 251–485 (ERIS…LTGT). Phosphoserine; by autocatalysis occurs at positions 423 and 424.

It belongs to the KaiC family. In terms of assembly, multimerizes, probably forming homohexamers, no interaction with KaiC1 or KaiC3 is seen.

The enzyme catalyses L-seryl-[protein] + ATP = O-phospho-L-seryl-[protein] + ADP + H(+). It catalyses the reaction L-threonyl-[protein] + ATP = O-phospho-L-threonyl-[protein] + ADP + H(+). It carries out the reaction ATP + H2O = ADP + phosphate + H(+). In terms of biological role, autophosphorylates independently of KaiA. This chain is Circadian clock protein KaiC2, found in Synechocystis sp. (strain ATCC 27184 / PCC 6803 / Kazusa).